A 1756-amino-acid polypeptide reads, in one-letter code: Multifunctional conjugation protein TraI (1756 aa).

A DNA relaxase region spans residues 1-330 (MLSFSVVKSA…TQAIAGLSER (330 aa)). The O-(5'-phospho-DNA)-tyrosine intermediate; for relaxase activity role is filled by Y16. The active-site Relaxase is Y17. The Mg(2+) site is built by H146, H157, and H159. A DNA helicase I region spans residues 950-1500 (GKEAVTPLME…LRDVAAGRAV (551 aa)). 992-999 (GYAGVGKT) is a binding site for ATP. A coiled-coil region spans residues 1719–1753 (EQEAVREVARENLLQERLQQIERDMVRDLQKEKTL).

To TraI of plasmid F. Monomer. Part of the relaxosome, a complex composed of plasmid-encodes TraI, TraM, TraY and host-encoded IHF bound to the F plasmid origin of transfer (oriT). Directly contacts coupling protein TraD. Seems to directly contact TraM via its C-terminus. Requires Mg(2+) as cofactor.

The protein localises to the cytoplasm. The enzyme catalyses ATP-independent breakage of single-stranded DNA, followed by passage and rejoining.. It catalyses the reaction ATP + H2O = ADP + phosphate + H(+). Its function is as follows. Conjugative DNA transfer (CDT) is the unidirectional transfer of ssDNA plasmid from a donor to a recipient cell. It is the central mechanism by which antibiotic resistance and virulence factors are propagated in bacterial populations. Part of the relaxosome, which facilitates a site- and strand-specific cut in the origin of transfer by TraI, at the nic site. Relaxosome formation requires binding of IHF and TraY to the oriT region, which then facilitates binding of TraI relaxase. TraI forms a covalent 5'-phosphotyrosine intermediate linkage to the ssDNA. The transesterified T-strand moves from the donor cell to the recipient cell in a 5'to 3' direction, with the DNA helicase activity of TraI unwinding the DNA. DNA transfer occurs via the conjugative pore (transferosome) an intercellular junction mediated by a type IV secretion system, with TraD providing the means to link the relaxosome to the conjugative pore. The relaxase completes DNA transfer by reversing the covalent phosphotyrosine linkage and releasing the T-strand. In terms of biological role, traI has also been identified as DNA helicase I. DNA. helicase I is a potent, highly processive DNA-dependent ATPase, able to unwind about 1.1 kb dsDNA per second in a 5' to 3' manner. In Escherichia coli, this protein is Multifunctional conjugation protein TraI (traI).